Here is a 501-residue protein sequence, read N- to C-terminus: Pyruvate dehydrogenase protein X component, mitochondrial (501 aa).

The N-terminal 53 residues, 1-53 (MAASWRLHCNQPLLRYLLGFSSRRSLGLAQGAAAWPVDRGASWRWFHSTQLLQ), are a transit peptide targeting the mitochondrion. The Lipoyl-binding domain maps to 56-132 (PIKVLMPSLS…QLGSLIALMV (77 aa)). At lysine 97 the chain carries N6-lipoyllysine. A disordered region spans residues 145–176 (KDVSAPPPVSKPPAPTQPSPQPQIPCPARKEH). A compositionally biased stretch (pro residues) spans 149 to 169 (APPPVSKPPAPTQPSPQPQIP). The 38-residue stretch at 183–220 (RLSPAARNILEKHSLDASQGTATGPRGIFTKEDALKLV) folds into the Peripheral subunit-binding (PSBD) domain. Lysine 194 is subject to N6-acetyllysine. Residue serine 196 is modified to Phosphoserine. The tract at residues 228–256 (ITESRPASAPPPSLSASVPPQATAGPSYP) is disordered. Lysine 394 carries the post-translational modification N6-succinyllysine.

The protein belongs to the 2-oxoacid dehydrogenase family. In terms of assembly, part of the inner core of the multimeric pyruvate dehydrogenase complex that is composed of about 48 DLAT and 12 PDHX molecules. This core binds multiple copies of pyruvate dehydrogenase (subunits PDH1A and PDHB, E1), dihydrolipoamide acetyltransferase (DLAT, E2) and lipoamide dehydrogenase (DLD, E3). Interacts with SIRT4. Interacts with DLD. Post-translationally, delipoylated at Lys-97 by SIRT4, delipoylation decreases the PHD complex activity.

The protein localises to the mitochondrion matrix. Required for anchoring dihydrolipoamide dehydrogenase (E3) to the dihydrolipoamide transacetylase (E2) core of the pyruvate dehydrogenase complexes of eukaryotes. This specific binding is essential for a functional PDH complex. This Mus musculus (Mouse) protein is Pyruvate dehydrogenase protein X component, mitochondrial (Pdhx).